A 605-amino-acid polypeptide reads, in one-letter code: uncharacterized protein (605 aa).

2 disordered regions span residues 10–78 (RRGG…FPPA) and 216–248 (RAPDCPSPRTPMVKPPFRIPDAKPGLTPSVRNP). The segment covering 20–48 (AGGRPAAGGRPAAGGRPAAGSRAAAGAAG) has biased composition (low complexity). The segment covering 220–233 (CPSPRTPMVKPPFR) has biased composition (pro residues).

This is an uncharacterized protein from Dryophytes versicolor (chameleon treefrog).